The chain runs to 140 residues: CBS domain-containing protein YhcV (140 aa).

2 consecutive CBS domains span residues 8-64 and 72-127; these read MTTQ…GRDG and MSTE…NESA.

The protein is CBS domain-containing protein YhcV (yhcV) of Bacillus subtilis (strain 168).